We begin with the raw amino-acid sequence, 105 residues long: Putative toxin MazF8 (105 aa).

Forms a complex with cognate antitoxin MazE8.

Its function is as follows. Putative toxic component of a type II toxin-antitoxin (TA) system. Acts as an endoribonuclease. Neutralized by coexpression with cognate antitoxin MazE8. This is Putative toxin MazF8 (mazF8) from Mycobacterium tuberculosis (strain CDC 1551 / Oshkosh).